The primary structure comprises 701 residues: L-glutamate oxidase precursor (701 aa).

Positions 1 to 14 are cleaved as a signal peptide; the sequence is MTTDTARRHTGAER. The FAD site is built by Ala69, Glu88, Ala89, Arg97, Met123, Arg124, Met354, and Ser409. A propeptide spanning residues 481–520 is cleaved from the precursor; it reads LALPQSVRNLPTGLLGAHPSVDESRIGEEQVEYYRNSELR. Residues Glu645, Trp653, and Ile654 each contribute to the FAD site. The propeptide occupies 684-701; sequence RRGAAAATEPMREEALTS.

This sequence belongs to the flavin monoamine oxidase family. LGOX subfamily. As to quaternary structure, the LGOX precursor forms homodimers. The mature enzyme is a heterohexamer composed of 2 alpha chains, 2 beta chains and 2 gamma chains (alpha2beta2gamma2). The cofactor is FAD. The precursor form is proteolytically cleaved by an endopeptidase into alpha, beta and gamma chains, which form the stable mature enzyme. Activation by proteolysis occurs after secretion.

It is found in the secreted. It catalyses the reaction L-glutamate + O2 + H2O = H2O2 + 2-oxoglutarate + NH4(+). Its activity is regulated as follows. Produced as a single polypeptide precursor and is activated by proteolytic cleavage. The LGOX precursor is an active enzyme, but it exhibits lower catalytic efficiency and lower thermostability compared with the mature hexameric LGOX. The mature form is strongly inhibited by p-chloromercuribenzoate, but not by CuCl(2), EDTA and diethyldithiocarbamate. Catalyzes the oxidative deamination of L-glutamate to 2-ketoglutarate along with the production of ammonia and hydrogen peroxide. Shows strict substrate specificity for L-glutamate, and exhibits only very weak activity with L-aspartate. The protein is L-glutamate oxidase precursor of Streptomyces sp.